The following is a 300-amino-acid chain: N-acetylmannosamine kinase (300 aa).

ATP is bound by residues 5 to 12 and 132 to 139; these read ALDIGGTK and GVGGGIVL. Residues histidine 156, cysteine 166, cysteine 168, and cysteine 173 each contribute to the Zn(2+) site.

Belongs to the ROK (NagC/XylR) family. NanK subfamily. In terms of assembly, homodimer.

The catalysed reaction is an N-acyl-D-mannosamine + ATP = an N-acyl-D-mannosamine 6-phosphate + ADP + H(+). Its pathway is amino-sugar metabolism; N-acetylneuraminate degradation; D-fructose 6-phosphate from N-acetylneuraminate: step 2/5. Catalyzes the phosphorylation of N-acetylmannosamine (ManNAc) to ManNAc-6-P. The chain is N-acetylmannosamine kinase from Haemophilus influenzae (strain PittGG).